A 375-amino-acid chain; its full sequence is DNA replication and repair protein RecF (375 aa).

ATP is bound at residue 30-37 (GENAQGKT).

It belongs to the RecF family.

It is found in the cytoplasm. The RecF protein is involved in DNA metabolism; it is required for DNA replication and normal SOS inducibility. RecF binds preferentially to single-stranded, linear DNA. It also seems to bind ATP. The chain is DNA replication and repair protein RecF from Enterococcus faecalis (strain ATCC 700802 / V583).